Consider the following 109-residue polypeptide: U26-theraphotoxin-Cg1a (109 aa).

The signal sequence occupies residues 1 to 18 (MNTIIPLLLLSLLITVYA). Positions 19 to 67 (YALEDGNKEEIQDIAESEFEASNEMLQLAHLLEADRAETEEDRNSRQKR) are excised as a propeptide. Disulfide bonds link Cys68-Cys83, Cys75-Cys88, and Cys82-Cys103.

Belongs to the neurotoxin 14 (magi-1) family. 07 (Jztx-56) subfamily. In terms of tissue distribution, expressed by the venom gland.

The protein resides in the secreted. Probable ion channel inhibitor. In Chilobrachys guangxiensis (Chinese earth tiger tarantula), this protein is U26-theraphotoxin-Cg1a.